Here is a 1329-residue protein sequence, read N- to C-terminus: BRCT domain-containing protein At4g02110 (1329 aa).

2 consecutive BRCT domains span residues 7-97 and 104-194; these read LPPK…SILY and NGIP…DYEI. Disordered stretches follow at residues 295–378, 393–470, 576–645, 745–827, and 952–1077; these read ANKT…SMER, GEEF…TSEL, EVPE…SPTD, NDVP…ADGK, and AKKE…KESK. Polar residues-rich tracts occupy residues 323–335 and 363–378; these read SLATYSRKTLQRS and SAFNTSASKSGSSMER. 2 stretches are compositionally biased toward basic and acidic residues: residues 410–422 and 600–611; these read VSRKDSLRVHHNS and RMKDKQETELTT. A compositionally biased stretch (basic residues) spans 793–802; it reads GKSRVKKTKI. Basic and acidic residues-rich tracts occupy residues 818-827 and 971-983; these read DGGDNSADGK and DDNKCKHGKEGIV. Residues 986–1004 are compositionally biased toward low complexity; it reads SSLQSGKKGSSSRVEVGKS. The segment covering 1024–1047 has biased composition (basic and acidic residues); that stretch reads VMKDVGDNSAKEKENIAVDNESRK. Residues 1090 to 1181 enclose the BRCT 3 domain; it reads FQDQEHEPKF…KLLQEEPYEW (92 aa).

The polypeptide is BRCT domain-containing protein At4g02110 (Arabidopsis thaliana (Mouse-ear cress)).